The chain runs to 23 residues: Potassium channel toxin alpha-KTx 13.1 (23 aa).

Cystine bridges form between cysteine 2/cysteine 15, cysteine 5/cysteine 20, and cysteine 9/cysteine 22. Residues 13 to 20 form an interaction with Ca(2+)-activated K(+) channels region; it reads GKCINGRC.

As to expression, expressed by the venom gland.

The protein localises to the secreted. Blocks reversibly Shaker B potassium channels. Also displaces binding of noxiustoxin to mouse brain synaptosome membranes. This Tityus obscurus (Amazonian scorpion) protein is Potassium channel toxin alpha-KTx 13.1.